Consider the following 158-residue polypeptide: Cytosine deaminase (158 aa).

Residues 9-129 form the CMP/dCMP-type deaminase domain; that stretch reads KWDQKGMDIA…KYLQTRGHEV (121 aa). N51 provides a ligand contact to substrate. Residue H62 participates in Zn(2+) binding. E64 serves as the catalytic Proton donor. 2 residues coordinate Zn(2+): C91 and C94. D155 contacts substrate.

The protein belongs to the cytidine and deoxycytidylate deaminase family. Homodimer. It depends on Zn(2+) as a cofactor.

The protein localises to the cytoplasm. It localises to the nucleus. The catalysed reaction is cytosine + H2O + H(+) = uracil + NH4(+). The protein operates within pyrimidine metabolism; UMP biosynthesis via salvage pathway; uracil from cytosine: step 1/1. Functionally, catalyzes the hydrolytic deamination of cytosine to uracil or 5-methylcytosine to thymine. Is involved in the pyrimidine salvage pathway, which allows the cell to utilize cytosine for pyrimidine nucleotide synthesis. This Saccharomyces cerevisiae (strain ATCC 204508 / S288c) (Baker's yeast) protein is Cytosine deaminase.